Reading from the N-terminus, the 324-residue chain is Glutathione synthetase (324 aa).

The ATP-grasp domain maps to 125–312; sequence EKLFTTTHFP…ISTIILDNLE (188 aa). ATP is bound at residue 152–209; it reads FIKTYKDIIIKPLHGMAGLSIFRIKEHDPNTSVIIETMTKYETIPCISQNYITDIQKG. Glu-283 and Asn-285 together coordinate Mg(2+).

The protein belongs to the prokaryotic GSH synthase family. The cofactor is Mg(2+). Mn(2+) is required as a cofactor.

The catalysed reaction is gamma-L-glutamyl-L-cysteine + glycine + ATP = glutathione + ADP + phosphate + H(+). Its pathway is sulfur metabolism; glutathione biosynthesis; glutathione from L-cysteine and L-glutamate: step 2/2. This Buchnera aphidicola subsp. Baizongia pistaciae (strain Bp) protein is Glutathione synthetase.